We begin with the raw amino-acid sequence, 415 residues long: D-serine dehydratase (415 aa).

N6-(pyridoxal phosphate)lysine is present on Lys-68. Pyridoxal 5'-phosphate is bound by residues Tyr-204, Tyr-211, Thr-253, Gly-279, and Asn-280. Residues His-385 and Cys-387 each coordinate Zn(2+).

It belongs to the DSD1 family. Homodimer. The cofactor is pyridoxal 5'-phosphate. It depends on Zn(2+) as a cofactor.

The protein localises to the cytoplasm. It is found in the nucleus. The enzyme catalyses D-serine = pyruvate + NH4(+). In terms of biological role, catalyzes the conversion of D-serine to pyruvate and ammonia. May play a role in D-serine detoxification. This chain is D-serine dehydratase, found in Schizosaccharomyces pombe (strain 972 / ATCC 24843) (Fission yeast).